A 72-amino-acid polypeptide reads, in one-letter code: ATP synthase protein 8 (72 aa).

A helical transmembrane segment spans residues 16 to 36 (WTLIALFLLFSFLVVSVLPAV).

It belongs to the ATPase protein 8 family. F-type ATPases have 2 components, CF(1) - the catalytic core - and CF(0) - the membrane proton channel.

It is found in the mitochondrion membrane. Functionally, mitochondrial membrane ATP synthase (F(1)F(0) ATP synthase or Complex V) produces ATP from ADP in the presence of a proton gradient across the membrane which is generated by electron transport complexes of the respiratory chain. F-type ATPases consist of two structural domains, F(1) - containing the extramembraneous catalytic core and F(0) - containing the membrane proton channel, linked together by a central stalk and a peripheral stalk. During catalysis, ATP synthesis in the catalytic domain of F(1) is coupled via a rotary mechanism of the central stalk subunits to proton translocation. Part of the complex F(0) domain. Minor subunit located with subunit a in the membrane. This is ATP synthase protein 8 (MTATP8) from Metridium senile (Brown sea anemone).